The chain runs to 589 residues: Aspartate--tRNA(Asp/Asn) ligase (589 aa).

Glu-175 contributes to the L-aspartate binding site. Positions 199–202 (QQLK) are aspartate. Arg-221 serves as a coordination point for L-aspartate. Residues 221 to 223 (RDE) and Gln-230 contribute to the ATP site. His-451 is an L-aspartate binding site. ATP is bound at residue Glu-485. Arg-492 contacts L-aspartate. Residue 537–540 (GIDR) participates in ATP binding.

Belongs to the class-II aminoacyl-tRNA synthetase family. Type 1 subfamily. Homodimer.

The protein resides in the cytoplasm. The catalysed reaction is tRNA(Asx) + L-aspartate + ATP = L-aspartyl-tRNA(Asx) + AMP + diphosphate. Functionally, aspartyl-tRNA synthetase with relaxed tRNA specificity since it is able to aspartylate not only its cognate tRNA(Asp) but also tRNA(Asn). Reaction proceeds in two steps: L-aspartate is first activated by ATP to form Asp-AMP and then transferred to the acceptor end of tRNA(Asp/Asn). The sequence is that of Aspartate--tRNA(Asp/Asn) ligase from Roseiflexus sp. (strain RS-1).